Consider the following 187-residue polypeptide: GTP cyclohydrolase 1 (187 aa).

Positions 81, 84, and 152 each coordinate Zn(2+).

The protein belongs to the GTP cyclohydrolase I family. As to quaternary structure, homomer.

The catalysed reaction is GTP + H2O = 7,8-dihydroneopterin 3'-triphosphate + formate + H(+). The protein operates within cofactor biosynthesis; 7,8-dihydroneopterin triphosphate biosynthesis; 7,8-dihydroneopterin triphosphate from GTP: step 1/1. The protein is GTP cyclohydrolase 1 of Pyrobaculum neutrophilum (strain DSM 2338 / JCM 9278 / NBRC 100436 / V24Sta) (Thermoproteus neutrophilus).